A 129-amino-acid chain; its full sequence is Glycine cleavage system H protein (129 aa).

The region spanning 24 to 106 is the Lipoyl-binding domain; that stretch reads IATIGITEFA…YGEGWFLKVR (83 aa). K65 is modified (N6-lipoyllysine).

The protein belongs to the GcvH family. In terms of assembly, the glycine cleavage system is composed of four proteins: P, T, L and H. The cofactor is (R)-lipoate.

Functionally, the glycine cleavage system catalyzes the degradation of glycine. The H protein shuttles the methylamine group of glycine from the P protein to the T protein. This chain is Glycine cleavage system H protein, found in Nostoc punctiforme (strain ATCC 29133 / PCC 73102).